A 107-amino-acid chain; its full sequence is U1-lycotoxin-Ls1b (107 aa).

Positions 1-20 (MMKVLVVIALLVTLISYSSS) are cleaved as a signal peptide. Positions 21 to 41 (EGIDDLEADELLSLMANEQTR) are excised as a propeptide. Disulfide bonds link Cys-44–Cys-59, Cys-51–Cys-68, Cys-58–Cys-86, and Cys-70–Cys-84.

The protein belongs to the neurotoxin 19 (CSTX) family. 04 (U1-Lctx) subfamily. In terms of tissue distribution, expressed by the venom gland.

It is found in the secreted. This chain is U1-lycotoxin-Ls1b, found in Lycosa singoriensis (Wolf spider).